A 223-amino-acid polypeptide reads, in one-letter code: Translation initiation factor 6 (223 aa).

The protein belongs to the eIF-6 family.

Its function is as follows. Binds to the 50S ribosomal subunit and prevents its association with the 30S ribosomal subunit to form the 70S initiation complex. The protein is Translation initiation factor 6 of Saccharolobus islandicus (strain Y.N.15.51 / Yellowstone #2) (Sulfolobus islandicus).